The following is a 302-amino-acid chain: MQTPEIKEGTEQYLWRRKTMNPGDKGVKRKGSDRQREKMSVIVMAGTEDARRIISRLSGMPWVEVTATATTEHGSDLAEKSGASRTVTGALDSDGLRELMADLDACILIDATHPFAAQATENALRACRETGTIYVRFERPEVIPDGVIRVGSFREAGEVASSLIGDGEVVMHLAGVSTLGDVLRSLEPERVAVRVLPSTSSIEKCLQLGVPPSHIIAMQGRFSAEMNLALLREYRAGAVITKESGETGGLPEKVEAASELGIPVILVERPEVNLEGEAVFGNINDLMDHVLKILRDMGQPGD.

Residues 1-10 (MQTPEIKEGT) are compositionally biased toward basic and acidic residues. The segment at 1 to 37 (MQTPEIKEGTEQYLWRRKTMNPGDKGVKRKGSDRQRE) is disordered.

It belongs to the precorrin-6x reductase family.

It catalyses the reaction Co-precorrin-6B + NAD(+) = Co-precorrin-6A + NADH + H(+). Its pathway is cofactor biosynthesis; adenosylcobalamin biosynthesis; cob(II)yrinate a,c-diamide from sirohydrochlorin (anaerobic route): step 7/10. Functionally, catalyzes the reduction of the macrocycle of cobalt-precorrin-6A to cobalt-precorrin-6B. The polypeptide is Cobalt-precorrin-6A reductase (cbiJ) (Methanothermobacter thermautotrophicus (strain ATCC 29096 / DSM 1053 / JCM 10044 / NBRC 100330 / Delta H) (Methanobacterium thermoautotrophicum)).